A 122-amino-acid polypeptide reads, in one-letter code: Large ribosomal subunit protein uL14 (122 aa).

The protein belongs to the universal ribosomal protein uL14 family. As to quaternary structure, part of the 50S ribosomal subunit. Forms a cluster with proteins L3 and L19. In the 70S ribosome, L14 and L19 interact and together make contacts with the 16S rRNA in bridges B5 and B8.

In terms of biological role, binds to 23S rRNA. Forms part of two intersubunit bridges in the 70S ribosome. In Francisella tularensis subsp. holarctica (strain LVS), this protein is Large ribosomal subunit protein uL14.